Reading from the N-terminus, the 82-residue chain is ATP synthase subunit c, chloroplastic (82 aa).

2 helical membrane-spanning segments follow: residues A7–G27 and L57–A77.

The protein belongs to the ATPase C chain family. In terms of assembly, F-type ATPases have 2 components, F(1) - the catalytic core - and F(0) - the membrane proton channel. F(1) has five subunits: alpha(3), beta(3), gamma(1), delta(1), epsilon(1). F(0) has four main subunits: a(1), b(1), b'(1) and c(10-14). The alpha and beta chains form an alternating ring which encloses part of the gamma chain. F(1) is attached to F(0) by a central stalk formed by the gamma and epsilon chains, while a peripheral stalk is formed by the delta, b and b' chains.

It localises to the plastid. It is found in the chloroplast thylakoid membrane. Functionally, f(1)F(0) ATP synthase produces ATP from ADP in the presence of a proton or sodium gradient. F-type ATPases consist of two structural domains, F(1) containing the extramembraneous catalytic core and F(0) containing the membrane proton channel, linked together by a central stalk and a peripheral stalk. During catalysis, ATP synthesis in the catalytic domain of F(1) is coupled via a rotary mechanism of the central stalk subunits to proton translocation. In terms of biological role, key component of the F(0) channel; it plays a direct role in translocation across the membrane. A homomeric c-ring of between 10-14 subunits forms the central stalk rotor element with the F(1) delta and epsilon subunits. This Rhodomonas salina (Cryptomonas salina) protein is ATP synthase subunit c, chloroplastic.